Here is a 1481-residue protein sequence, read N- to C-terminus: MFHEEVPNSTHPQEQDCLPSQHANAYKDMPVGQENGGVSEAGECLSSTSCEYGPSTSAEACVLAATRRGPTLLHIDRHQIPAVEPSAQALELQGLGVDVYDQAVLEQGVLQQVDSAMHEASCVAQLADAEKEYQSVLDDLMSCTTSLRQINKIIEQLSPQAASNRDINRKLDSVKRQKYNKEQQLKKITAKQKRLQAILGGAGVQVELDHASLEEDDAEPGPSCLGSMLMPAQETAWEELIRTGQMTPFGTPAPQKQEKKPRKIMLNEASGFEKYLAEQAQLSFERKKQAATKRTAKKAIVISESSRAAIETKADQRSQVLSQTDKRLKKHSRKLQRRALQFQGKVGLPSGKKPLEPEVRPEAEGDTEGEESGSSPTDGEEEEEQEEEEGVASLSSDDVSYELKPLRKRQKYQKKVPVQEIDDDFFPSSEEEDEAMEGRGGGRKVARRQDDGDEDYYKQRLRRWNRLRLQDKEKRLKLEDDSEESDAEFDEGFKVPGFLFKKLFKYQQTGVRWLWELHCQQAGGILGDEMGLGKTIQIIAFLAGLSYSKIRTRGSNYRFEGLGPTIIVCPTTVMHQWVKEFHTWWPPFRVAVLHETGSYTHKKERLIRDIVYCHGVLITSYSYIRLMQDDISRHDWHYVILDEGHKIRNPNAAVTLACKQFRTPHRIILSGSPMQNNLRELWSLFDFIFPGKLGTLPVFMEQFSVPITMGGYSNASPVQVKTAYKCACVLRDTINPYLLRRMKSDVKMSLSLPDKNEQVLFCRLTDEQHKVYQNFIDSKAVYRILNGENQIFSGLVALRKICNHPDLFSGGPKNASGPPEDELEEEQFGHWRRSGKMIVVESLLKIWHRQGQRVLLFSQSRQMLHILEVFLRAHKYSYLKMDGTTTIASRQPLITKYNEDTSIFVFLLTTRVGGLGVNLTGANRVIIYDPDWNPSTDTQARERAWRIGQKKQVTVYRLLTAGTIEEKIYHRQIFKQFLTNRVLKDPKQRRFFKSNDLYELFTLTSPDASQGTETSAIFAGTGSSIQTPKCQLKKRTSTVLGTDPKCKKPPVSDTPANAATLIGEKPKAAGATGRSVTSGESGPFKGDHDTNGNRASSVAFGEETDAGSTLEHLSVMSGDGKHSDSPTVDHTSRPPVEASTSEKQGSSYAGARCQAQTEPVPMSEQMEGQFSKYKSKRKHDASEEETTEKRPQPKQKAKNSKHCRDAKFEGTRVPHLVKKRRYRQQTSEQEGGAKDRSSDDYVLEKLFKKSVGVHSVVRHDAIIDGSSPDYVLVEAEANRVAQDALKALRLSRQQCLGAASGVPTWTGHRGISGAPTGVKNRFGQKRDSSLPVQHPSSLTEKTQNNMKKEGKAHTPEHFSGKEDGASVSGAPSSSSLLARMRARNHMILPERLESDSEHLAEAAAVPPCGTEHDDLLVDMRNFIAFQAQVDGQASTQEILQEFESKLSVAQSCVFRELLRNLCNFHRTPGGEGIWKLKPEYC.

Positions 1 to 506 (MFHEEVPNST…GFLFKKLFKY (506 aa)) are N-terminal domain; essential for its chromatin remodeling activity. Ser-158 bears the Phosphoserine; by CDK2 mark. Lys-170 bears the N6-methylated lysine; by EHMT2 mark. Lys-256 is covalently cross-linked (Glycyl lysine isopeptide (Lys-Gly) (interchain with G-Cter in SUMO2)). Lys-298 is subject to N6-methylated lysine; by EHMT2. A disordered region spans residues 309–452 (AIETKADQRS…RKVARRQDDG (144 aa)). Over residues 327-337 (RLKKHSRKLQR) the composition is skewed to basic residues. Residues 353 to 363 (KPLEPEVRPEA) are compositionally biased toward basic and acidic residues. Acidic residues-rich tracts occupy residues 378–390 (DGEEEEEQEEEEG) and 420–435 (EIDDDFFPSSEEEDEA). A phosphoserine mark is found at Ser-428 and Ser-429. Position 444 is an N6-methylated lysine; by EHMT2 (Lys-444). A phosphoserine mark is found at Ser-482 and Ser-485. The region spanning 515 to 691 (WELHCQQAGG…WSLFDFIFPG (177 aa)) is the Helicase ATP-binding domain. 528 to 535 (DEMGLGKT) contributes to the ATP binding site. The DEAH box motif lies at 642–645 (DEGH). Positions 839 to 998 (VVESLLKIWH…RRFFKSNDLY (160 aa)) constitute a Helicase C-terminal domain. 3 disordered regions span residues 1040–1096 (LGTD…NRAS), 1114–1238 (SVMS…DRSS), and 1307–1372 (GHRG…GAPS). Lys-1047 is modified (N6-methylated lysine; by EHMT2). The segment covering 1138 to 1147 (ASTSEKQGSS) has biased composition (polar residues). Residues 1192 to 1201 (QPKQKAKNSK) show a composition bias toward basic residues. Residues 1202-1212 (HCRDAKFEGTR) are compositionally biased toward basic and acidic residues. Over residues 1330–1345 (LPVQHPSSLTEKTQNN) the composition is skewed to polar residues. The segment covering 1346–1364 (MKKEGKAHTPEHFSGKEDG) has biased composition (basic and acidic residues). Residues 1373–1385 (SSSLLARMRARNH) carry the CSA-interacting motif (CIM) motif. A ubiquitin-binding domain (UBD) region spans residues 1387–1416 (ILPERLESDSEHLAEAAAVPPCGTEHDDLL). Residues 1417-1481 (VDMRNFIAFQ…GIWKLKPEYC (65 aa)) form a winged-helix domain (WHD) region. An essential for its interaction with RNA polymerase II, transcription-coupled nucleotide excision repair activity, association with chromatin after UV irradiation and for mediating the UV-induced translocation of ERRC8 to the nuclear matrix region spans residues 1434–1481 (STQEILQEFESKLSVAQSCVFRELLRNLCNFHRTPGGEGIWKLKPEYC).

Belongs to the SNF2/RAD54 helicase family. As to quaternary structure, homodimer. Binds DNA. Interacts with ERCC8. Interacts with RNA polymerase II; interaction is enhanced by UV irradiation. Component of the B-WICH complex, at least composed of SMARCA5/SNF2H, BAZ1B/WSTF, SF3B1, DEK, MYO1C, ERCC6, MYBBP1A and DDX21. Interacts with KIAA1530/UVSSA. Interacts with ELOA and CUL5; the interaction is induced by DNA damaging agents or by inhibitors of RNA polymerase II elongation. Interacts (via WHD region) with RIF1. Interacts with SMARCC2/BAF170, SMARCB1/BAF47 and the neuron-specific chromatin remodeling complex (nBAF complex). Interacts with ERCC5/XPG (via C-terminus); the interaction stimulates ERCC6/CSB binding to DNA repair bubble and ERCC6/CSB ATPase activity. May form a complex composed of RNA polymerase II, ERCC6/CSB and ERCC5/XPG which associates with the DNA repair bubble during transcription-coupled nucleotide excision repair. Interacts with CAND1, CSTF1, DDX3X, DDX5, DDX17, DDX23, DHX36, HDAC1, HNRNPU, MTA2, PRPF3, PSMD3, RBBP4, SFPQ, SMARCA1, SMARCA2, TOP1, USP7 and XRCC5. Post-translationally, phosphorylated in a cell cycle-dependent manner at Ser-158 by cyclin A-CDK2 in response to DNA damage. Phosphorylation at this site promotes the intramolecular interaction of the N-terminal domain with the helicase ATP-binding domain, thereby probably releasing the inhibitory effect of the N-terminal domain on its ATPase activity. Phosphorylation is essential for its chromatin remodeling activity. In terms of processing, ubiquitinated at the C-terminus. Ubiquitination by the CSA complex leads to ERCC6 proteasomal degradation in a UV-dependent manner. Stabilized following interaction with KIAA1530/UVSSA, which promotes recruitment of deubiquitinating enzyme USP7, leading to deubiquitination of ERCC6 thereby preventing UV-induced degradation of ERCC6 by the proteasome.

It localises to the nucleus. Its subcellular location is the chromosome. The catalysed reaction is ATP + H2O = ADP + phosphate + H(+). In terms of biological role, essential factor involved in transcription-coupled nucleotide excision repair (TC-NER), a process during which RNA polymerase II-blocking lesions are rapidly removed from the transcribed strand of active genes. Plays a central role in the initiation of the TC-NER process: specifically recognizes and binds RNA polymerase II stalled at a lesion, and mediates recruitment of ERCC8/CSA, initiating DNA damage excision by TFIIH recruitment. Upon DNA-binding, it locally modifies DNA conformation by wrapping the DNA around itself, thereby modifying the interface between stalled RNA polymerase II and DNA. Acts as a chromatin remodeler at DSBs; DNA-dependent ATPase-dependent activity is essential for this function. Plays an important role in regulating the choice of the DNA double-strand breaks (DSBs) repair pathway and G2/M checkpoint activation; DNA-dependent ATPase activity is essential for this function. Regulates the DNA repair pathway choice by inhibiting non-homologous end joining (NHEJ), thereby promoting the homologous recombination (HR)-mediated repair of DSBs during the S/G2 phases of the cell cycle. Mediates the activation of the ATM- and CHEK2-dependent DNA damage responses thus preventing premature entry of cells into mitosis following the induction of DNA DSBs. Remodels chromatin by evicting histones from chromatin flanking DSBs, limiting RIF1 accumulation at DSBs thereby promoting BRCA1-mediated HR. Required for stable recruitment of ELOA and CUL5 to DNA damage sites. Also involved in UV-induced translocation of ERCC8 to the nuclear matrix. Essential for neuronal differentiation and neuritogenesis; regulates transcription and chromatin remodeling activities required during neurogenesis. In Mus musculus (Mouse), this protein is DNA excision repair protein ERCC-6 (Ercc6).